Consider the following 298-residue polypeptide: ADP/ATP translocase 2 (298 aa).

An N-acetylmethionine modification is found at Met1. The Mitochondrial intermembrane portion of the chain corresponds to 1-7 (MTDAAVS). Thr2 bears the N-acetylthreonine; in ADP/ATP translocase 2, N-terminally processed mark. Residues 6–98 (VSFAKDFLAG…FAFKDKYKQI (93 aa)) form a Solcar 1 repeat. Residue Ser7 is modified to Phosphoserine. The chain crosses the membrane as a helical span at residues 8-37 (FAKDFLAGGVAAAISKTAVAPIERVKLLLQ). An N6-malonyllysine modification is found at Lys23. The Mitochondrial matrix segment spans residues 38–74 (VQHASKQITADKQYKGIMDCVVRIPKEQGVLSFWRGN). Position 43 is an N6-succinyllysine (Lys43). Lys52 is subject to N6,N6,N6-trimethyllysine; alternate. At Lys52 the chain carries N6,N6-dimethyllysine; alternate. Residue Lys52 is modified to N6-methyllysine; alternate. The chain crosses the membrane as a helical span at residues 75-99 (LANVIRYFPTQALNFAFKDKYKQIF). Positions 80 and 92 each coordinate ADP. Lys92 and Lys96 each carry N6-malonyllysine. Topologically, residues 100–109 (LGGVDKRTQF) are mitochondrial intermembrane. The residue at position 105 (Lys105) is an N6-acetyllysine; alternate. Lys105 carries the post-translational modification N6-succinyllysine; alternate. The helical transmembrane segment at 110–130 (WRYFAGNLASGGAAGATSLCF) threads the bilayer. 2 Solcar repeats span residues 111–201 (RYFA…AKGM) and 212–297 (ISWM…IKKY). At 131 to 178 (VYPLDFARTRLAADVGKAGDAREFKGLGDCLVKITKSDGIRGLYQGFN) the chain is on the mitochondrial matrix side. An N6-methyllysine; alternate modification is found at Lys147. Residues Lys147 and Lys155 each carry the N6-acetyllysine; alternate modification. N6-succinyllysine; alternate is present on residues Lys147 and Lys155. Residue Lys147 is modified to N6-malonyllysine; alternate. Residues Lys163 and Lys166 each carry the N6-acetyllysine modification. Residues 179–199 (VSVQGIIIYRAAYFGIYDTAK) form a helical membrane-spanning segment. Residues 200-210 (GMLPDPKNTHI) lie on the Mitochondrial intermembrane side of the membrane. The helical transmembrane segment at 211 to 231 (FISWMIAQSVTAVAGLTSYPF) threads the bilayer. At 232-273 (DTVRRRMMMQSGRKGSDIMYTGTIDCWKKIARDEGSKAFFKG) the chain is on the mitochondrial matrix side. Residue Arg235 participates in ADP binding. Residues 235-240 (RRRMMM) are important for transport activity. Positions 235–240 (RRRMMM) match the Nucleotide carrier signature motif motif. Lys268 is modified (N6-acetyllysine; alternate). An N6-succinyllysine; alternate modification is found at Lys268. Residues 274–291 (AWSNVLRGMGGAFVLVLY) form a helical membrane-spanning segment. Residues 292-298 (DEIKKYT) are Mitochondrial intermembrane-facing.

Belongs to the mitochondrial carrier (TC 2.A.29) family. In terms of assembly, monomer. Component of the MMXD complex, which includes CIAO1, ERCC2, CIAO2B, MMS19 and SLC25A5/ANT2. Interacts with AK4. Interacts with TIMM44; leading to inhibit the presequence translocase TIMM23, thereby promoting stabilization of PINK1. Trimethylated by ANTKMT at Lys-52.

It is found in the mitochondrion inner membrane. It localises to the membrane. The catalysed reaction is ADP(in) + ATP(out) = ADP(out) + ATP(in). The enzyme catalyses H(+)(in) = H(+)(out). The matrix-open state (m-state) is inhibited by the membrane-permeable bongkrekic acid (BKA). The cytoplasmic-open state (c-state) is inhibited by the membrane-impermeable toxic inhibitor carboxyatractyloside (CATR). Proton transporter activity is inhibited by ADP:ATP antiporter activity. In terms of biological role, ADP:ATP antiporter that mediates import of ADP into the mitochondrial matrix for ATP synthesis, and export of ATP out to fuel the cell. Cycles between the cytoplasmic-open state (c-state) and the matrix-open state (m-state): operates by the alternating access mechanism with a single substrate-binding site intermittently exposed to either the cytosolic (c-state) or matrix (m-state) side of the inner mitochondrial membrane. In addition to its ADP:ATP antiporter activity, also involved in mitochondrial uncoupling and mitochondrial permeability transition pore (mPTP) activity. Plays a role in mitochondrial uncoupling by acting as a proton transporter: proton transport uncouples the proton flows via the electron transport chain and ATP synthase to reduce the efficiency of ATP production and cause mitochondrial thermogenesis. Proton transporter activity is inhibited by ADP:ATP antiporter activity, suggesting that SLC25A5/ANT2 acts as a master regulator of mitochondrial energy output by maintaining a delicate balance between ATP production (ADP:ATP antiporter activity) and thermogenesis (proton transporter activity). Proton transporter activity requires free fatty acids as cofactor, but does not transport it. Probably mediates mitochondrial uncoupling in tissues that do not express UCP1. Also plays a key role in mPTP opening, a non-specific pore that enables free passage of the mitochondrial membranes to solutes of up to 1.5 kDa, and which contributes to cell death. It is however unclear if SLC25A5/ANT2 constitutes a pore-forming component of mPTP or regulates it. Acts as a regulator of mitophagy independently of ADP:ATP antiporter activity: promotes mitophagy via interaction with TIMM44, leading to inhibit the presequence translocase TIMM23, thereby promoting stabilization of PINK1. As part of the mitotic spindle-associated MMXD complex it may play a role in chromosome segregation. The sequence is that of ADP/ATP translocase 2 from Tachyglossus aculeatus aculeatus (Southeast Australian short-beaked echidna).